A 434-amino-acid chain; its full sequence is Bifunctional protein GlmU (434 aa).

Residues 1 to 226 (MNKNKISIVI…ENEYKGVNSK (226 aa)) form a pyrophosphorylase region. Residues 11–14 (LAAG), K25, Q77, and 84–85 (GT) each bind UDP-N-acetyl-alpha-D-glucosamine. D105 provides a ligand contact to Mg(2+). G138, E152, N167, and N224 together coordinate UDP-N-acetyl-alpha-D-glucosamine. Residue N224 coordinates Mg(2+). A linker region spans residues 227–247 (KDLSDAEIIMQDKIKNSLMES). The segment at 248-434 (GVTMQLPSTI…DFYYKFFAKK (187 aa)) is N-acetyltransferase. UDP-N-acetyl-alpha-D-glucosamine is bound by residues R311 and K328. H339 serves as the catalytic Proton acceptor. Residues Y342 and N353 each coordinate UDP-N-acetyl-alpha-D-glucosamine. Residues A356, 362–363 (NY), S381, and A399 each bind acetyl-CoA.

In the N-terminal section; belongs to the N-acetylglucosamine-1-phosphate uridyltransferase family. It in the C-terminal section; belongs to the transferase hexapeptide repeat family. As to quaternary structure, homotrimer. Mg(2+) is required as a cofactor.

It localises to the cytoplasm. The catalysed reaction is alpha-D-glucosamine 1-phosphate + acetyl-CoA = N-acetyl-alpha-D-glucosamine 1-phosphate + CoA + H(+). It carries out the reaction N-acetyl-alpha-D-glucosamine 1-phosphate + UTP + H(+) = UDP-N-acetyl-alpha-D-glucosamine + diphosphate. The protein operates within nucleotide-sugar biosynthesis; UDP-N-acetyl-alpha-D-glucosamine biosynthesis; N-acetyl-alpha-D-glucosamine 1-phosphate from alpha-D-glucosamine 6-phosphate (route II): step 2/2. It participates in nucleotide-sugar biosynthesis; UDP-N-acetyl-alpha-D-glucosamine biosynthesis; UDP-N-acetyl-alpha-D-glucosamine from N-acetyl-alpha-D-glucosamine 1-phosphate: step 1/1. It functions in the pathway bacterial outer membrane biogenesis; LPS lipid A biosynthesis. Catalyzes the last two sequential reactions in the de novo biosynthetic pathway for UDP-N-acetylglucosamine (UDP-GlcNAc). The C-terminal domain catalyzes the transfer of acetyl group from acetyl coenzyme A to glucosamine-1-phosphate (GlcN-1-P) to produce N-acetylglucosamine-1-phosphate (GlcNAc-1-P), which is converted into UDP-GlcNAc by the transfer of uridine 5-monophosphate (from uridine 5-triphosphate), a reaction catalyzed by the N-terminal domain. The protein is Bifunctional protein GlmU of Sulfurimonas denitrificans (strain ATCC 33889 / DSM 1251) (Thiomicrospira denitrificans (strain ATCC 33889 / DSM 1251)).